Here is a 190-residue protein sequence, read N- to C-terminus: dCTP deaminase (190 aa).

DCTP is bound at residue lysine 113 to arginine 118. The Proton donor/acceptor role is filled by glutamate 139. Residues glutamine 158, tyrosine 172, lysine 181, and glutamine 182 each coordinate dCTP.

The protein belongs to the dCTP deaminase family. Homotrimer.

It carries out the reaction dCTP + H2O + H(+) = dUTP + NH4(+). Its pathway is pyrimidine metabolism; dUMP biosynthesis; dUMP from dCTP (dUTP route): step 1/2. Functionally, catalyzes the deamination of dCTP to dUTP. In Chlamydia caviae (strain ATCC VR-813 / DSM 19441 / 03DC25 / GPIC) (Chlamydophila caviae), this protein is dCTP deaminase.